Consider the following 104-residue polypeptide: Large ribosomal subunit protein uL23 (104 aa).

This sequence belongs to the universal ribosomal protein uL23 family. Part of the 50S ribosomal subunit. Contacts protein L29, and trigger factor when it is bound to the ribosome.

Its function is as follows. One of the early assembly proteins it binds 23S rRNA. One of the proteins that surrounds the polypeptide exit tunnel on the outside of the ribosome. Forms the main docking site for trigger factor binding to the ribosome. In Ralstonia nicotianae (strain ATCC BAA-1114 / GMI1000) (Ralstonia solanacearum), this protein is Large ribosomal subunit protein uL23.